Here is a 90-residue protein sequence, read N- to C-terminus: Protein RALF-like 3 (90 aa).

A signal peptide spans 1–29 (MSNLRGTNRFILVAVLVSFVFLSIMNAEA). Cystine bridges form between Cys59/Cys67 and Cys80/Cys86.

This sequence belongs to the plant rapid alkalinization factor (RALF) family.

Its subcellular location is the secreted. Functionally, cell signaling peptide that may regulate plant stress, growth, and development. Mediates a rapid alkalinization of extracellular space by mediating a transient increase in the cytoplasmic Ca(2+) concentration leading to a calcium-dependent signaling events through a cell surface receptor and a concomitant activation of some intracellular mitogen-activated protein kinases. The polypeptide is Protein RALF-like 3 (RALFL3) (Arabidopsis thaliana (Mouse-ear cress)).